Here is a 151-residue protein sequence, read N- to C-terminus: Ribosome maturation factor RimP (151 aa).

Belongs to the RimP family.

Its subcellular location is the cytoplasm. In terms of biological role, required for maturation of 30S ribosomal subunits. The sequence is that of Ribosome maturation factor RimP from Haemophilus influenzae (strain PittEE).